The chain runs to 439 residues: S-layer protein (439 aa).

Residues 1–30 (MKKNLRIVSAAAAALLAVAPIAATAMPVNA) form the signal peptide.

Post-translationally, glycosylated.

Its subcellular location is the secreted. The protein localises to the cell wall. The protein resides in the S-layer. Its function is as follows. The S-layer is a paracrystalline mono-layered assembly of proteins which coat the surface of bacteria. The chain is S-layer protein (slpH) from Lactobacillus helveticus (Lactobacillus suntoryeus).